A 345-amino-acid polypeptide reads, in one-letter code: UPF0228 protein MA_2656 (345 aa).

Belongs to the UPF0228 family.

In Methanosarcina acetivorans (strain ATCC 35395 / DSM 2834 / JCM 12185 / C2A), this protein is UPF0228 protein MA_2656.